The primary structure comprises 82 residues: Small ribosomal subunit protein bS18 (82 aa).

Positions 1–20 (MAEVSSSTVRRPFHRRRKTC) are disordered.

The protein belongs to the bacterial ribosomal protein bS18 family. In terms of assembly, part of the 30S ribosomal subunit. Forms a tight heterodimer with protein bS6.

Functionally, binds as a heterodimer with protein bS6 to the central domain of the 16S rRNA, where it helps stabilize the platform of the 30S subunit. The sequence is that of Small ribosomal subunit protein bS18 from Allorhizobium ampelinum (strain ATCC BAA-846 / DSM 112012 / S4) (Agrobacterium vitis (strain S4)).